Consider the following 156-residue polypeptide: Small ribosomal subunit protein uS7 (156 aa).

This sequence belongs to the universal ribosomal protein uS7 family. As to quaternary structure, part of the 30S ribosomal subunit. Contacts proteins S9 and S11.

In terms of biological role, one of the primary rRNA binding proteins, it binds directly to 16S rRNA where it nucleates assembly of the head domain of the 30S subunit. Is located at the subunit interface close to the decoding center, probably blocks exit of the E-site tRNA. This Parvibaculum lavamentivorans (strain DS-1 / DSM 13023 / NCIMB 13966) protein is Small ribosomal subunit protein uS7.